The primary structure comprises 204 residues: Thymidylate kinase (204 aa).

11-18 (GLDKSGKT) is a binding site for ATP.

It belongs to the thymidylate kinase family.

It catalyses the reaction dTMP + ATP = dTDP + ADP. It functions in the pathway pyrimidine metabolism; dTTP biosynthesis. This Vaccinia virus (strain Ankara) (VACV) protein is Thymidylate kinase (TMK).